Here is a 367-residue protein sequence, read N- to C-terminus: MRRNWLLILTLFLLMFIEKYESTVSLTAPPTVKLENGSSTNVDITLGHPLNSTLVITFEVTFRSKNLTIVELPDEVIVPRGEKNASFQVTSQNIGQVTVFLHGNHSNQTCPRIRFLVIHSRIVSIINQVIGWIYFMAWSVSFYPQVIQNWRRKSVIGLSFDFLALNLTGFVAYSVFNIGLLWVPYIQEEFLLKYPNGVNPVDSNDAFFSLHAVALTLIVILQCCLYERGNQRVSWPSIGFLVLAWLFVLVTMIVAAVGITTWLQFLFCFSYIKLIITLIKYFPQAYMNFYYKSTKGWSIGGVLLDFTGGSFSLLQMFLQSYNNDQWTLIFGDPTKFGLGVFTIFFDVVFFIQHFYLYRKKPGYDQLN.

A signal peptide spans 1–22 (MRRNWLLILTLFLLMFIEKYES). Residues 23–125 (TVSLTAPPTV…LVIHSRIVSI (103 aa)) lie on the Lumenal side of the membrane. Residues N36, N51, N66, N84, N104, and N107 are each glycosylated (N-linked (GlcNAc...) asparagine). Positions 123-189 (VSIINQVIGW…LLWVPYIQEE (67 aa)) constitute a PQ-loop 1 domain. A helical transmembrane segment spans residues 126–150 (INQVIGWIYFMAWSVSFYPQVIQNW). The Cytoplasmic segment spans residues 151-159 (RRKSVIGLS). Residues 160-179 (FDFLALNLTGFVAYSVFNIG) traverse the membrane as a helical segment. N166 contributes to the L-cystine binding site. The Lumenal segment spans residues 180-202 (LLWVPYIQEEFLLKYPNGVNPVD). The helical transmembrane segment at 203–225 (SNDAFFSLHAVALTLIVILQCCL) threads the bilayer. Position 205 (D205) interacts with H(+). Residues 226-234 (YERGNQRVS) are Cytoplasmic-facing. A helical transmembrane segment spans residues 235–257 (WPSIGFLVLAWLFVLVTMIVAAV). Residues 258 to 263 (GITTWL) are Lumenal-facing. The PQ-loop 2 domain maps to 263–328 (LQFLFCFSYI…QSYNNDQWTL (66 aa)). The helical transmembrane segment at 264-289 (QFLFCFSYIKLIITLIKYFPQAYMNF) threads the bilayer. Residues K273, K280, and Y281 each coordinate L-cystine. The Cytoplasmic segment spans residues 290 to 298 (YYKSTKGWS). Residues 299–308 (IGGVLLDFTG) form a helical membrane-spanning segment. L-cystine is bound at residue D305. Residue D305 participates in H(+) binding. The Lumenal segment spans residues 309–331 (GSFSLLQMFLQSYNNDQWTLIFG). A helical transmembrane segment spans residues 332-354 (DPTKFGLGVFTIFFDVVFFIQHF). Residue D346 participates in H(+) binding. The Cytoplasmic portion of the chain corresponds to 355–367 (YLYRKKPGYDQLN). Residues 362–366 (GYDQL) carry the Lysosomal targeting motif motif.

The protein belongs to the cystinosin family. As to quaternary structure, interacts with components of the V-ATPase complex. Interacts with components of the Ragulator complex. Interacts with RRAGA/RagA and RRAGC/RagC. Interacts with AP-3 complex subunit mu (AP3M1 or AP3M2).

It localises to the lysosome membrane. Its subcellular location is the melanosome membrane. The catalysed reaction is L-cystine(out) + H(+)(out) = L-cystine(in) + H(+)(in). Switches between a lumen- and a cytosol-open conformation: pH induces conformational changes and shifts the equilibrium to facilitate the transition between the lumen- and cytosol-open conformation, thereby promoting cystine transport. Protonation of specific aspartate residues (Asp-205, Asp-305 and Asp-346) favors the cytosol-open conformation. Its function is as follows. Cystine/H(+) symporter that mediates export of cystine, the oxidized dimer of cysteine, from lysosomes. Plays an important role in melanin synthesis by catalyzing cystine export from melanosomes, possibly by inhibiting pheomelanin synthesis. In addition to cystine export, also acts as a positive regulator of mTORC1 signaling in kidney proximal tubular cells, via interactions with components of the v-ATPase and Ragulator complexes. Also involved in small GTPase-regulated vesicle trafficking and lysosomal localization of LAMP2A, independently of cystine transporter activity. The sequence is that of Cystinosin from Mus musculus (Mouse).